The sequence spans 635 residues: Chaperone protein HtpG (635 aa).

An a; substrate-binding region spans residues 1–346 (MSQTTTTSAS…SADLPLNVSR (346 aa)). The interval 347–563 (EILQESRDVR…QNELSPHLLR (217 aa)) is b. The tract at residues 564–635 (MLKAAGQEAP…KRLNGLLLKA (72 aa)) is c.

Belongs to the heat shock protein 90 family. As to quaternary structure, homodimer.

It localises to the cytoplasm. In terms of biological role, molecular chaperone. Has ATPase activity. This is Chaperone protein HtpG from Bordetella pertussis (strain Tohama I / ATCC BAA-589 / NCTC 13251).